Reading from the N-terminus, the 233-residue chain is ATP synthase subunit a, chloroplastic (233 aa).

A run of 4 helical transmembrane segments spans residues 82 to 102 (VPFIGTLFLFIFVSNWSGALI), 121 to 141 (INTTAALALLTSLAYFYAGIS), 177 to 199 (LFGNILADELVVSVLTLLVPLIV), and 211 to 231 (SSIQALIFATLAAAYIGEAIE).

It belongs to the ATPase A chain family. As to quaternary structure, F-type ATPases have 2 components, CF(1) - the catalytic core - and CF(0) - the membrane proton channel. CF(1) has five subunits: alpha(3), beta(3), gamma(1), delta(1), epsilon(1). CF(0) has four main subunits: a, b, b' and c.

Its subcellular location is the plastid. It is found in the chloroplast thylakoid membrane. Key component of the proton channel; it plays a direct role in the translocation of protons across the membrane. The sequence is that of ATP synthase subunit a, chloroplastic from Galdieria sulphuraria (Red alga).